Reading from the N-terminus, the 297-residue chain is Magnetosome protein MamB (297 aa).

Over 1 to 12 (MKFENCRDCREE) the chain is Cytoplasmic. Positions 1-214 (MKFENCRDCR…GLMDSSVDTE (214 aa)) are transmembrane domain (TMD). A helical membrane pass occupies residues 13 to 33 (VVWWAFTADICMTLFKGILGL). The Lumenal segment spans residues 34-83 (MSGSVALVADSLHSGADVVASGVTQLSLKISNKPADERYPFGYGNIQYIS). A helical membrane pass occupies residues 84–104 (SAIVGSLLLIGASFLMYGSVV). Residues 105–112 (KLISGTYE) lie on the Cytoplasmic side of the membrane. The chain crosses the membrane as a helical span at residues 113–133 (APSIFAALGASVTVIVNELMY). At 134–164 (RYQICVGNENNSPAIIANAWDNRSDAISSAA) the chain is on the lumenal side. Residues 165–185 (VMVGVIASVIGFPIADTIAAI) traverse the membrane as a helical segment. The Cytoplasmic portion of the chain corresponds to 186 to 297 (GVSALVGHIG…PAPAAVTVRV (112 aa)). Positions 215–297 (LLQTAWQIAT…PAPAAVTVRV (83 aa)) are C-terminal domain (CTD).

The protein belongs to the cation diffusion facilitator (CDF) transporter (TC 2.A.4) family. Forms homodimers via its C-terminal domain, may form higher order multimers that are sensitive to reducing agent. Probably interacts with MamE. Interacts with MamM via their C-terminal domains.

Its subcellular location is the cell inner membrane. The protein localises to the magnetosome membrane. Its function is as follows. Plays a dual, essential role in magnetosome formation; required for magnetosome vesicle formation as well as biomineralization. Requires heterodimerization with MamM for stability. Probably binds and transports iron. One of 7 genes (mamLQBIEMO) able to induce magnetosome membrane biogenesis; coexpression of mamLQRBIEMO in a deletion of the 17 gene mamAB operon restores magnetosome vesicle formation but not magnetite biosynthesis. The sequence is that of Magnetosome protein MamB from Magnetospirillum gryphiswaldense (strain DSM 6361 / JCM 21280 / NBRC 15271 / MSR-1).